A 142-amino-acid polypeptide reads, in one-letter code: MSEKVDFYDFEKLLDKAYEELPENVKHHHSRFEVPPAQVTIAGNRTIIENFVDIAEAMNRDPNHLLKFILREVATAGTLEGRRAILQGRFTPYLIANKMKKYLKEFVICPVCGSPDTKIIKKGRFHFLKCEACGAETPIQHL.

The protein belongs to the eIF-2-beta/eIF-5 family. Heterotrimer composed of an alpha, a beta and a gamma chain.

Functionally, eIF-2 functions in the early steps of protein synthesis by forming a ternary complex with GTP and initiator tRNA. The chain is Translation initiation factor 2 subunit beta from Thermococcus kodakarensis (strain ATCC BAA-918 / JCM 12380 / KOD1) (Pyrococcus kodakaraensis (strain KOD1)).